Reading from the N-terminus, the 424-residue chain is Glutamate-1-semialdehyde 2,1-aminomutase (424 aa).

K258 carries the post-translational modification N6-(pyridoxal phosphate)lysine.

Belongs to the class-III pyridoxal-phosphate-dependent aminotransferase family. HemL subfamily. Pyridoxal 5'-phosphate is required as a cofactor.

The protein resides in the cytoplasm. The enzyme catalyses (S)-4-amino-5-oxopentanoate = 5-aminolevulinate. The protein operates within porphyrin-containing compound metabolism; protoporphyrin-IX biosynthesis; 5-aminolevulinate from L-glutamyl-tRNA(Glu): step 2/2. The sequence is that of Glutamate-1-semialdehyde 2,1-aminomutase from Pyrobaculum neutrophilum (strain DSM 2338 / JCM 9278 / NBRC 100436 / V24Sta) (Thermoproteus neutrophilus).